Consider the following 308-residue polypeptide: Ornithine carbamoyltransferase (308 aa).

Carbamoyl phosphate-binding positions include 51–54, Gln-78, Arg-102, and 129–132; these read STRT and HPTQ. L-ornithine-binding positions include Asn-160, Asp-224, and 228–229; that span reads SM. Residues 264–265 and Arg-292 contribute to the carbamoyl phosphate site; that span reads CL.

It belongs to the aspartate/ornithine carbamoyltransferase superfamily. OTCase family.

Its subcellular location is the cytoplasm. It catalyses the reaction carbamoyl phosphate + L-ornithine = L-citrulline + phosphate + H(+). It functions in the pathway amino-acid biosynthesis; L-arginine biosynthesis; L-arginine from L-ornithine and carbamoyl phosphate: step 1/3. Its function is as follows. Reversibly catalyzes the transfer of the carbamoyl group from carbamoyl phosphate (CP) to the N(epsilon) atom of ornithine (ORN) to produce L-citrulline. This chain is Ornithine carbamoyltransferase, found in Caldicellulosiruptor saccharolyticus (strain ATCC 43494 / DSM 8903 / Tp8T 6331).